Reading from the N-terminus, the 634-residue chain is Chaperone protein HtpG (634 aa).

The interval 1-342 (MTVDTDKQTL…SADLSLNVSR (342 aa)) is a; substrate-binding. Residues 343-559 (EILQSGPVVD…QGDLGLQMRQ (217 aa)) are b. The interval 560-634 (LLEASGQAVP…LNKLLLELSA (75 aa)) is c.

This sequence belongs to the heat shock protein 90 family. In terms of assembly, homodimer.

It localises to the cytoplasm. Functionally, molecular chaperone. Has ATPase activity. The protein is Chaperone protein HtpG of Xanthomonas campestris pv. campestris (strain ATCC 33913 / DSM 3586 / NCPPB 528 / LMG 568 / P 25).